Here is a 511-residue protein sequence, read N- to C-terminus: L-arabinose isomerase (511 aa).

Mn(2+) is bound by residues Glu316, Glu343, His360, and His459.

Belongs to the arabinose isomerase family. It depends on Mn(2+) as a cofactor.

It catalyses the reaction beta-L-arabinopyranose = L-ribulose. Its pathway is carbohydrate degradation; L-arabinose degradation via L-ribulose; D-xylulose 5-phosphate from L-arabinose (bacterial route): step 1/3. Functionally, catalyzes the conversion of L-arabinose to L-ribulose. This is L-arabinose isomerase from Arthrobacter sp. (strain FB24).